A 354-amino-acid chain; its full sequence is Trans-L-3-hydroxyproline dehydratase (354 aa).

The active-site Proton acceptor is Cys-104. Substrate contacts are provided by residues 105-106 (GH), Asp-269, and 274-275 (GS).

Belongs to the proline racemase family. As to quaternary structure, homodimer.

It catalyses the reaction trans-3-hydroxy-L-proline = 1-pyrroline-2-carboxylate + H2O. Catalyzes the dehydration of trans-3-hydroxy-L-proline to delta-1-pyrroline-2-carboxylate (Pyr2C). This Pongo abelii (Sumatran orangutan) protein is Trans-L-3-hydroxyproline dehydratase (L3HYPDH).